Consider the following 426-residue polypeptide: Enolase (426 aa).

Glutamine 163 lines the (2R)-2-phosphoglycerate pocket. Glutamate 205 serves as the catalytic Proton donor. Mg(2+)-binding residues include aspartate 242, glutamate 283, and aspartate 310. 4 residues coordinate (2R)-2-phosphoglycerate: lysine 335, arginine 364, serine 365, and lysine 386. Lysine 335 acts as the Proton acceptor in catalysis.

The protein belongs to the enolase family. It depends on Mg(2+) as a cofactor.

It is found in the cytoplasm. It localises to the secreted. The protein resides in the cell surface. It catalyses the reaction (2R)-2-phosphoglycerate = phosphoenolpyruvate + H2O. It functions in the pathway carbohydrate degradation; glycolysis; pyruvate from D-glyceraldehyde 3-phosphate: step 4/5. Its function is as follows. Catalyzes the reversible conversion of 2-phosphoglycerate (2-PG) into phosphoenolpyruvate (PEP). It is essential for the degradation of carbohydrates via glycolysis. This chain is Enolase, found in Cutibacterium acnes (strain DSM 16379 / KPA171202) (Propionibacterium acnes).